The chain runs to 183 residues: dCTP deaminase (183 aa).

A dCTP-binding site is contributed by K106 to R111. E132 (proton donor/acceptor) is an active-site residue. 3 residues coordinate dCTP: Q151, Y165, and Q175.

This sequence belongs to the dCTP deaminase family. In terms of assembly, homotrimer.

The catalysed reaction is dCTP + H2O + H(+) = dUTP + NH4(+). It participates in pyrimidine metabolism; dUMP biosynthesis; dUMP from dCTP (dUTP route): step 1/2. Functionally, catalyzes the deamination of dCTP to dUTP. The polypeptide is dCTP deaminase (Gluconobacter oxydans (strain 621H) (Gluconobacter suboxydans)).